The following is a 96-amino-acid chain: Muconolactone Delta-isomerase (96 aa).

The protein belongs to the muconolactone Delta-isomerase family. Homodecamer.

It catalyses the reaction (S)-muconolactone = (4,5-dihydro-5-oxofuran-2-yl)-acetate. It participates in aromatic compound metabolism; beta-ketoadipate pathway; 5-oxo-4,5-dihydro-2-furylacetate from catechol: step 3/3. This Acinetobacter baylyi (strain ATCC 33305 / BD413 / ADP1) protein is Muconolactone Delta-isomerase (catC).